A 178-amino-acid chain; its full sequence is Bifunctional protein PyrR (178 aa).

Residues 42–43, Arg83, 103–111, Arg136, and Val160 contribute to the substrate site; these read TR and DDVIYKGRT. Positions 99–111 match the PRPP-binding motif; sequence VVLVDDVIYKGRT.

Belongs to the purine/pyrimidine phosphoribosyltransferase family. PyrR subfamily.

The catalysed reaction is UMP + diphosphate = 5-phospho-alpha-D-ribose 1-diphosphate + uracil. Its function is as follows. Regulates the transcription of the pyrimidine nucleotide (pyr) operon in response to exogenous pyrimidines. Also displays a weak uracil phosphoribosyltransferase activity which is not physiologically significant. This Synechocystis sp. (strain ATCC 27184 / PCC 6803 / Kazusa) protein is Bifunctional protein PyrR.